The chain runs to 1032 residues: Vacuolar membrane protease (1032 aa).

Topologically, residues 1–11 (MRFQNPFAFRP) are cytoplasmic. A helical membrane pass occupies residues 12–32 (GPVSFWTTVIYLALVIPLIYV). The Vacuolar segment spans residues 33-426 (HETVPPAPSD…AWAVFALRGL (394 aa)). N-linked (GlcNAc...) asparagine glycosylation is found at Asn-50 and Asn-142. His-207 and Asp-219 together coordinate Zn(2+). Residue Glu-253 is the Proton acceptor of the active site. 3 residues coordinate Zn(2+): Glu-254, Glu-279, and His-352. Residues 427–447 (FAWSLTLLVATPLILVAITYI) form a helical membrane-spanning segment. Over 448–482 (LARKDKYYFFSRDIKMHHDINDDPVVLGGWKGFLR) the chain is Cytoplasmic. Residues 483–503 (FPFALVFAGALTIASTLLLAK) form a helical membrane-spanning segment. Residues 504–511 (FNPLIIYS) lie on the Vacuolar side of the membrane. The helical transmembrane segment at 512 to 532 (SPYAVWSMTLSIFYFSFWLIM) threads the bilayer. Topologically, residues 533 to 545 (RGASFIRPSALHR) are cytoplasmic. Residues 546-566 (GYVLIWLFALGWGLQVVGAVA) traverse the membrane as a helical segment. Residues 567 to 573 (EDRLHIA) are Vacuolar-facing. A helical membrane pass occupies residues 574–594 (ALYATVFLQSAVFLALFISLL). At 595-708 (EQFALLGKHD…WSGRLPSWTW (114 aa)) the chain is on the cytoplasmic side. Positions 616–631 (RDISSHGTDHESRPQP) are enriched in basic and acidic residues. A disordered region spans residues 616–666 (RDISSHGTDHESRPQPEEEPAQPEGDEDESEDATETTPLRANEPGYGSSTR). A compositionally biased stretch (acidic residues) spans 632-649 (EEEPAQPEGDEDESEDAT). A helical transmembrane segment spans residues 709–729 (IIQFLLLAPVPVILFGNLGLV). The Vacuolar segment spans residues 730–745 (AMSALQMTGTDGGSLL). A helical membrane pass occupies residues 746–766 (VPVLTLGIVSIFLLLPLTPFI). Residues 767 to 773 (HRVSHHV) are Cytoplasmic-facing. Residues 774 to 794 (PMFLLCVFAGTFIYNLVAFPF) traverse the membrane as a helical segment. At 795–1032 (SDSHRFKFYF…LVEVRKTYKV (238 aa)) the chain is on the vacuolar side. Asn-812 and Asn-884 each carry an N-linked (GlcNAc...) asparagine glycan.

It belongs to the peptidase M28 family. Zn(2+) serves as cofactor.

Its subcellular location is the vacuole membrane. Functionally, may be involved in vacuolar sorting and osmoregulation. The sequence is that of Vacuolar membrane protease from Fusarium vanettenii (strain ATCC MYA-4622 / CBS 123669 / FGSC 9596 / NRRL 45880 / 77-13-4) (Fusarium solani subsp. pisi).